A 445-amino-acid chain; its full sequence is TNF receptor-associated factor family protein DDB_G0290971 (445 aa).

The RING-type; degenerate zinc-finger motif lies at 23–67 (CPICFDLYYSSSSKKEVFQCRDGHLACKSCWSDSLLNKKECMICR). TRAF-type zinc fingers lie at residues 133–186 (KHQV…QLDA) and 186–242 (AHAL…ESID). Residues 269-307 (QLELVECKNQIYQINNKYEKLLERVIKLEQLSMDASNKL) are a coiled coil. The MATH domain maps to 314–441 (KNSIIFATFS…EDKLVIGLRI (128 aa)).

This sequence belongs to the TNF receptor-associated factor family. A subfamily.

The protein resides in the cytoplasm. Functionally, probable adapter protein and signal transducer that links members of the tumor necrosis factor receptor family to different signaling pathways by association with the receptor cytoplasmic domain and kinases. The sequence is that of TNF receptor-associated factor family protein DDB_G0290971 from Dictyostelium discoideum (Social amoeba).